Consider the following 183-residue polypeptide: Copper metallothionein 2 (183 aa).

Residues 1–35 are cys-rich copper-binding 1; the sequence is MAFNPNPEKTTSCCSTSKAQDKCTCPKGKCECETC. A spacer B1 region spans residues 36–45; that stretch reads PKSTKTPGSG. Residues 46 to 79 form a cys-rich copper-binding 2 region; it reads PCNCGVKEKVSTCGCNGSGAACTCPPGQCACDSC. The spacer B2 stretch occupies residues 80-88; it reads PRKAKSVST. The tract at residues 89 to 110 is cys-rich copper-binding 3; the sequence is CGCGGSAAACSCPPGKCACDSC. The segment at 111-120 is spacer B3; it reads PKQAQEKVSS. The tract at residues 121–142 is cys-rich copper-binding 4; it reads CACNGSGGACTCPPGKCSCSGC. The segment at 143-156 is spacer B4; that stretch reads PAQAKENPADQPTT. The cys-rich copper-binding 5 stretch occupies residues 157-183; that stretch reads CGCQGVGVACTCPPGQCACDGCPAKAK.

It belongs to the metallothionein superfamily.

It localises to the cytoplasm. Its subcellular location is the cell cortex. Functionally, copper metallothionein that protects the cell against copper toxicity by tightly chelating copper ions. Required for antioxidant-mediated growth rescue in the presence of fluconazole. Acts as a critical factors for lung colonization and virulence. The sequence is that of Copper metallothionein 2 from Cryptococcus neoformans var. grubii serotype A (strain H99 / ATCC 208821 / CBS 10515 / FGSC 9487) (Filobasidiella neoformans var. grubii).